A 212-amino-acid polypeptide reads, in one-letter code: MKEILPGLYILRRDRLATSPPSQEPLYGEKIVDGLRVWDPRRSKLAALLLRYPCLEGVVPSGKVLYLGAANGTTVSYLGDILTGGMIYAVEISPRAMRDLLLLAEQRENIIPVLGDAARPETYRRIVEPVDLLYQDVAQRNQAEIASRNASIYLKPNGLMVVMIKARSIDSTARSTEIFDEEIRRLSGVEVLRRVDLPHHRDHVAVVARKLR.

Residues 73–74, 91–92, 116–117, and 136–139 contribute to the S-adenosyl-L-methionine site; these read TT, EI, DA, and DVAQ.

This sequence belongs to the methyltransferase superfamily. Fibrillarin family. In terms of assembly, interacts with nop5. Component of box C/D small ribonucleoprotein (sRNP) particles that contain rpl7ae, FlpA and nop5, plus a guide RNA.

Its function is as follows. Involved in pre-rRNA and tRNA processing. Utilizes the methyl donor S-adenosyl-L-methionine to catalyze the site-specific 2'-hydroxyl methylation of ribose moieties in rRNA and tRNA. Site specificity is provided by a guide RNA that base pairs with the substrate. Methylation occurs at a characteristic distance from the sequence involved in base pairing with the guide RNA. This chain is Fibrillarin-like rRNA/tRNA 2'-O-methyltransferase, found in Methanothrix thermoacetophila (strain DSM 6194 / JCM 14653 / NBRC 101360 / PT) (Methanosaeta thermophila).